Consider the following 96-residue polypeptide: Cytochrome c-553 (96 aa).

Residues 1-19 form the signal peptide; it reads MKKVIMALGVLAFANALMA. 4 residues coordinate heme c: Cys-29, Cys-32, His-33, and Met-73.

Belongs to the cytochrome c family. Post-translationally, binds 1 heme c group covalently per subunit.

It is found in the periplasm. Its function is as follows. Natural electron acceptor for a formate dehydrogenase. This chain is Cytochrome c-553, found in Helicobacter pylori (strain ATCC 700392 / 26695) (Campylobacter pylori).